The primary structure comprises 490 residues: Sphingomyelinase (490 aa).

A signal peptide spans 1–31 (MDYAKRIGQVGALAVVLGVGAAVTTHAIGSA). The interval 30–49 (SAAPTDPSSSSTDSPVDACS) is disordered. The Periplasmic segment spans residues 32–136 (APTDPSSSST…FDACDPDGNR (105 aa)). Residues 137–145 (MTFAVRERG) form a beta stranded membrane-spanning segment. Topologically, residues 146–161 (APGGPQHGIVTVDQRT) are extracellular. Residues 162 to 168 (ASFIYTA) form a beta stranded membrane-spanning segment. The Periplasmic portion of the chain corresponds to 169–171 (DPG). Residues 172–182 (FVGTDTFSVNV) form a beta stranded membrane-spanning segment. Topologically, residues 183–187 (SDDTS) are extracellular. Residues 188-196 (LHVHGLAGY) traverse the membrane as a beta stranded segment. Residues 197-204 (LGPFHGHD) lie on the Periplasmic side of the membrane. A beta stranded membrane pass occupies residues 205–213 (DVATVTVFV). At 214–490 (GNTPTDTISG…HYVADNVAVR (277 aa)) the chain is on the extracellular side.

This sequence belongs to the SpmT family.

The protein localises to the cell outer membrane. It carries out the reaction a sphingomyelin + H2O = phosphocholine + an N-acylsphing-4-enine + H(+). Catalyzes the cleavage of sphingomyelin, a major lipid in eukaryotic cells, into ceramide and phosphocholine, which are then utilized by M.bovis as carbon, nitrogen and phosphorus sources, respectively. Thus, enables M.bovis to utilize sphingomyelin as a source of several essential nutrients for intracellular growth during infection. Furthermore, lyses erythrocytes and constitutes a hemolytic factor. The polypeptide is Sphingomyelinase (Mycobacterium bovis (strain ATCC BAA-935 / AF2122/97)).